Here is a 497-residue protein sequence, read N- to C-terminus: Lysine--tRNA ligase (497 aa).

Mg(2+) contacts are provided by Glu-409 and Glu-416.

The protein belongs to the class-II aminoacyl-tRNA synthetase family. Homodimer. It depends on Mg(2+) as a cofactor.

It localises to the cytoplasm. It catalyses the reaction tRNA(Lys) + L-lysine + ATP = L-lysyl-tRNA(Lys) + AMP + diphosphate. The polypeptide is Lysine--tRNA ligase (Streptococcus pyogenes serotype M49 (strain NZ131)).